Here is a 133-residue protein sequence, read N- to C-terminus: MSNNSVVYWGTGRRKTSVARVRLVPGNGTITINGRPGDNYLNYNPSYIAAVKAPLETLGLSSEYDILVNVHGGGLTGQSGAIKQGAARALCELSADNRKPLKTEGHLSRDPRAKERRKYGLKKARKAPQFSKR.

The tract at residues 94–133 (SADNRKPLKTEGHLSRDPRAKERRKYGLKKARKAPQFSKR) is disordered. A compositionally biased stretch (basic and acidic residues) spans 95 to 113 (ADNRKPLKTEGHLSRDPRA). A compositionally biased stretch (basic residues) spans 114–133 (KERRKYGLKKARKAPQFSKR).

It belongs to the universal ribosomal protein uS9 family.

The sequence is that of Small ribosomal subunit protein uS9 from Synechococcus sp. (strain CC9605).